Reading from the N-terminus, the 800-residue chain is Phenylalanine--tRNA ligase beta subunit (800 aa).

A tRNA-binding domain is found at 39 to 154; sequence SKDIKNLVVG…TEVEPGTDAL (116 aa). The B5 domain occupies 408–483; the sequence is SFVTPIDITA…RIYGYDEIPS (76 aa). Positions 461, 467, 470, and 471 each coordinate Mg(2+). One can recognise an FDX-ACB domain in the interval 708-800; that stretch reads PKFPGVTRDI…ALQAQGATIR (93 aa).

The protein belongs to the phenylalanyl-tRNA synthetase beta subunit family. Type 1 subfamily. In terms of assembly, tetramer of two alpha and two beta subunits. It depends on Mg(2+) as a cofactor.

It localises to the cytoplasm. It carries out the reaction tRNA(Phe) + L-phenylalanine + ATP = L-phenylalanyl-tRNA(Phe) + AMP + diphosphate + H(+). This is Phenylalanine--tRNA ligase beta subunit from Staphylococcus haemolyticus (strain JCSC1435).